Consider the following 419-residue polypeptide: MSGLPDHLRRPVRGMRDWLPPQYYALRHMEEVLCKVAESFGYRRVETPVVEHFEVLAKKAGQDVINEIYYFKDKAGRDLGLRFDMTVPVARVLSYNLELPRPVRWYYFTKVFRYDEPQHGRYREFYQFGVELVGSSSPRADAEVIQLLIASLEAAGASNFYVRINDRRAVDKLLEHLGVAPYRDIIYKALDKKLKLPREDVIKIMTGGGVSKEIAEEIYNTATEITIQEAVELLYKLDKALGASYEKIVKYLEASVPMERLKFDMSIVRGLDYYTGIVFEAFVGEYKLAVGGGGRYDDLLELYSGVKTPALGFAIGVERLMEAVGIQNVERPLDYYIYIFDDDAYKYAAAVAKKLRTEGYSVVVELGEKGLKDAFEYALKVGARHIIIIGRKELEKGVIKVRDLEKRIEVEKPLSQFLA.

This sequence belongs to the class-II aminoacyl-tRNA synthetase family.

It localises to the cytoplasm. It catalyses the reaction tRNA(His) + L-histidine + ATP = L-histidyl-tRNA(His) + AMP + diphosphate + H(+). This Pyrobaculum aerophilum (strain ATCC 51768 / DSM 7523 / JCM 9630 / CIP 104966 / NBRC 100827 / IM2) protein is Histidine--tRNA ligase.